The sequence spans 291 residues: Protein ZAR1-like (291 aa).

The segment at 103 to 152 (GSQTLHSSSLSDRTSSRKPTEAWEVGRRALIRRPQDGEDEESQEELTGPT) is disordered. Residues 106-115 (TLHSSSLSDR) show a composition bias toward low complexity. Residues 116 to 129 (TSSRKPTEAWEVGR) are compositionally biased toward basic and acidic residues. Residues 195-280 (LKYGYFHCKD…QELCGHCKDK (86 aa)) form a 3CxxC-type zinc finger.

The protein belongs to the ZAR1 family. Interacts with YBX2. As to expression, expressed in oocytes and zygotes. Predominantly expressed in maturing oocytes before maternal-to-zygotic transition (MZT). Less abundant than Zar1.

Its subcellular location is the cytoplasm. The protein resides in the cytoplasmic ribonucleoprotein granule. In terms of biological role, mRNA-binding protein required for maternal mRNA storage, translation and degradation during oocyte maturation. Probably promotes formation of some phase-separated membraneless compartment that stores maternal mRNAs in oocytes: acts by undergoing liquid-liquid phase separation upon binding to maternal mRNAs. Binds to the 3'-UTR of maternal mRNAs, inhibiting their translation. The sequence is that of Protein ZAR1-like from Mus musculus (Mouse).